Here is a 766-residue protein sequence, read N- to C-terminus: Phospholipid phosphatase-related protein type 4 (766 aa).

Ser-37 bears the Phosphoserine mark. 3 consecutive transmembrane segments (helical) span residues Leu-68–Phe-88, Ala-120–Val-140, and Phe-179–Leu-199. Residues Asn-215 and Asn-220 are each glycosylated (N-linked (GlcNAc...) asparagine). The helical transmembrane segment at Ser-248 to Phe-268 threads the bilayer. An N-linked (GlcNAc...) asparagine glycan is attached at Asn-269. The next 2 helical transmembrane spans lie at Lys-277 to Thr-297 and Val-309 to Gly-329. Ser-347 is modified (phosphoserine). Residue Asn-363 is glycosylated (N-linked (GlcNAc...) asparagine). Ser-386 carries the phosphoserine modification. Asn-433 carries N-linked (GlcNAc...) asparagine glycosylation. The residue at position 439 (Ser-439) is a Phosphoserine. Residues Ser-454–Gly-494 are disordered. Asn-456 carries N-linked (GlcNAc...) asparagine glycosylation. A phosphoserine mark is found at Ser-462 and Ser-474. Asn-515, Asn-545, and Asn-570 each carry an N-linked (GlcNAc...) asparagine glycan. Ser-608 is subject to Phosphoserine. 3 disordered regions span residues Pro-634 to Ala-654, Asp-672 to His-701, and Glu-742 to Asp-766. A compositionally biased stretch (basic and acidic residues) spans Asp-672 to Glu-697. The span at Arg-743–Asn-752 shows a compositional bias: polar residues.

This sequence belongs to the PA-phosphatase related phosphoesterase family. O-glycosylated. Probably at Ser-347. As to expression, brain-specific, it is exclusively expressed in neurons (at protein level).

The protein resides in the postsynaptic density membrane. Postsynaptic density membrane protein that indirectly regulates glutamatergic synaptic transmission through lysophosphatidic acid (LPA)-mediated signaling pathways. Binds lysophosphatidic acid (LPA) and mediates its internalization into cells. Could act as receptor or a transporter of this lipid at the post-synaptic membrane. Modulates lysophosphatidic acid (LPA) activity in neuron axonal outgrowth during development by attenuating phospholipid-induced axon collapse. This is Phospholipid phosphatase-related protein type 4 from Mus musculus (Mouse).